The following is a 230-amino-acid chain: Demethylmenaquinone methyltransferase (230 aa).

S-adenosyl-L-methionine-binding positions include threonine 62, aspartate 80, 100–101 (DA), and serine 117.

It belongs to the class I-like SAM-binding methyltransferase superfamily. MenG/UbiE family.

It carries out the reaction a 2-demethylmenaquinol + S-adenosyl-L-methionine = a menaquinol + S-adenosyl-L-homocysteine + H(+). It participates in quinol/quinone metabolism; menaquinone biosynthesis; menaquinol from 1,4-dihydroxy-2-naphthoate: step 2/2. Methyltransferase required for the conversion of demethylmenaquinol (DMKH2) to menaquinol (MKH2). This chain is Demethylmenaquinone methyltransferase, found in Mycobacterium sp. (strain JLS).